The chain runs to 482 residues: Glycogen synthase (482 aa).

Lysine 21 is an ADP-alpha-D-glucose binding site.

It belongs to the glycosyltransferase 1 family. Bacterial/plant glycogen synthase subfamily.

It carries out the reaction [(1-&gt;4)-alpha-D-glucosyl](n) + ADP-alpha-D-glucose = [(1-&gt;4)-alpha-D-glucosyl](n+1) + ADP + H(+). The protein operates within glycan biosynthesis; glycogen biosynthesis. Synthesizes alpha-1,4-glucan chains using ADP-glucose. This is Glycogen synthase from Clostridium perfringens (strain 13 / Type A).